The sequence spans 134 residues: D-ribose pyranase (134 aa).

H20 serves as the catalytic Proton donor. Residues D28, H99, and 123-125 contribute to the substrate site; that span reads FSN.

This sequence belongs to the RbsD / FucU family. RbsD subfamily. As to quaternary structure, homodecamer.

The protein localises to the cytoplasm. The catalysed reaction is beta-D-ribopyranose = beta-D-ribofuranose. It participates in carbohydrate metabolism; D-ribose degradation; D-ribose 5-phosphate from beta-D-ribopyranose: step 1/2. Its function is as follows. Catalyzes the interconversion of beta-pyran and beta-furan forms of D-ribose. This Staphylococcus carnosus (strain TM300) protein is D-ribose pyranase.